Reading from the N-terminus, the 318-residue chain is UAP56-interacting factor (318 aa).

Met-1 is modified (N-acetylmethionine). A disordered region spans residues 1–27 (MNRFSTRLMGATATPPPAPPKARSNEN). Residue Thr-14 is modified to Phosphothreonine. Position 24 is a phosphoserine (Ser-24). The UAP56-binding motif signature appears at 27-45 (NLDKIDMSLDDIIKLNRKE). Ser-61 and Ser-118 each carry phosphoserine. Residue Lys-140 forms a Glycyl lysine isopeptide (Lys-Gly) (interchain with G-Cter in SUMO1) linkage. The span at 163-180 (LNRKNNIPNNFTRSGNKL) shows a compositional bias: polar residues. A disordered region spans residues 163–183 (LNRKNNIPNNFTRSGNKLSHQ). Lys-261 is covalently cross-linked (Glycyl lysine isopeptide (Lys-Gly) (interchain with G-Cter in SUMO2)).

This sequence belongs to the UIF family. In terms of assembly, interacts with DDX39B/UAP56 and NXF1; interaction with DDX39B/UAP56 and NXF1 are mutually exclusive. Interacts with SSRP1; required for its recruitment to mRNAs. Interacts with CHTOP.

It localises to the nucleus. Its subcellular location is the nucleoplasm. The protein localises to the nucleus speckle. Required for mRNA export from the nucleus to the cytoplasm. Acts as an adapter that uses the DDX39B/UAP56-NFX1 pathway to ensure efficient mRNA export and delivering to the nuclear pore. Associates with spliced and unspliced mRNAs simultaneously with ALYREF/THOC4. This chain is UAP56-interacting factor (FYTTD1), found in Bos taurus (Bovine).